We begin with the raw amino-acid sequence, 136 residues long: T-cell receptor alpha chain constant (136 aa).

An Ig-like C1-type domain is found at 19–103 (STLCLFTDFD…LTEKSFETDM (85 aa)). Cysteine 22 and cysteine 72 form a disulfide bridge. N-linked (GlcNAc...) asparagine glycans are attached at residues asparagine 66, asparagine 80, and asparagine 109. A connecting peptide region spans residues 90-111 (CDATLTEKSFETDMNLNFQNLS). Residues 111–131 (SVMGLRILLLKVAGFNLLMTL) form a helical membrane-spanning segment. Residues 132–136 (RLWSS) lie on the Cytoplasmic side of the membrane.

In terms of assembly, alpha-beta TR is a heterodimer composed of an alpha and beta chain; disulfide-linked. The alpha-beta TR is associated with the transmembrane signaling CD3 coreceptor proteins to form the TR-CD3 (TcR or TCR). The assembly of alpha-beta TR heterodimers with CD3 occurs in the endoplasmic reticulum where a single alpha-beta TR heterodimer associates with one CD3D-CD3E heterodimer, one CD3G-CD3E heterodimer and one CD247 homodimer forming a stable octameric structure. CD3D-CD3E and CD3G-CD3E heterodimers preferentially associate with TR alpha and TR beta chains, respectively. The association of the CD247 homodimer is the last step of TcR assembly in the endoplasmic reticulum and is required for transport to the cell surface.

Its subcellular location is the cell membrane. Constant region of T cell receptor (TR) alpha chain. Alpha-beta T cell receptors are antigen specific receptors which are essential to the immune response and are present on the cell surface of T lymphocytes. Recognize peptide-major histocompatibility (MH) (pMH) complexes that are displayed by antigen presenting cells (APC), a prerequisite for efficient T cell adaptive immunity against pathogens. Binding of alpha-beta TR to pMH complex initiates TR-CD3 clustering on the cell surface and intracellular activation of LCK that phosphorylates the ITAM motifs of CD3G, CD3D, CD3E and CD247 enabling the recruitment of ZAP70. In turn, ZAP70 phosphorylates LAT, which recruits numerous signaling molecules to form the LAT signalosome. The LAT signalosome propagates signal branching to three major signaling pathways, the calcium, the mitogen-activated protein kinase (MAPK) kinase and the nuclear factor NF-kappa-B (NF-kB) pathways, leading to the mobilization of transcription factors that are critical for gene expression and essential for T cell growth and differentiation. The T cell repertoire is generated in the thymus, by V-(D)-J rearrangement. This repertoire is then shaped by intrathymic selection events to generate a peripheral T cell pool of self-MH restricted, non-autoaggressive T cells. Post-thymic interaction of alpha-beta TR with the pMH complexes shapes TR structural and functional avidity. The protein is T-cell receptor alpha chain constant of Mus musculus (Mouse).